Consider the following 478-residue polypeptide: Solute carrier family 7 member 13 (478 aa).

Residues 1–14 are Cytoplasmic-facing; it reads MAMDSKKEIRLKRE. A helical transmembrane segment spans residues 15 to 35; it reads LGYFWGTNFLIINIIGAGIFV. Residues 36–47 lie on the Extracellular side of the membrane; sequence SPKGVLQHSSMN. A helical membrane pass occupies residues 48–68; that stretch reads VGVSLCVWAVCAVLTLTSALC. Residues 69–89 lie on the Cytoplasmic side of the membrane; sequence SAEIGITFPYSGAHYYFLKRC. A helical membrane pass occupies residues 90–110; the sequence is FGPLVAFLRLWTSLFLGPGLI. Over 111-129 the chain is Extracellular; the sequence is ASQALLLAEYGVQPFYPSC. Residues 130-150 form a helical membrane-spanning segment; that stretch reads SAPILPRKCLALAMLWIVGIL. At 151–163 the chain is on the cytoplasmic side; sequence NSRGVKELSWLQT. Residues 164 to 184 form a helical membrane-spanning segment; sequence VSSVLKVGILGVISLSGLFLL. Topologically, residues 185-208 are extracellular; sequence VRGKKENVQRLQNAFDAEFPEVSQ. The chain crosses the membrane as a helical span at residues 209–229; the sequence is LIEAIFQGYFAFSGGGCFTCI. Topologically, residues 230–242 are cytoplasmic; it reads AGELKKPSKTIPR. The chain crosses the membrane as a helical span at residues 243 to 263; sequence CIFTGLPLVTVVYLLANISYL. The Extracellular portion of the chain corresponds to 264-288; the sequence is TVLTPQEMLSSDAVALTWTDRVIPQ. Residues 289-309 traverse the membrane as a helical segment; it reads FTWTVPFAISASLFINLVINV. The Cytoplasmic segment spans residues 310 to 338; sequence LETSRVLYIASENGQLPLLFCALNVHSSP. The helical transmembrane segment at 339-359 threads the bilayer; sequence FIAVLLIISMASILIVLTNLI. Position 360 (Asp-360) is a topological domain, extracellular. The chain crosses the membrane as a helical span at residues 361–381; the sequence is LINYLYFVVSIWTALSIIGIL. Topologically, residues 382 to 395 are cytoplasmic; sequence KLRYQEPNLHRPYK. A helical transmembrane segment spans residues 396–416; that stretch reads VFLPFTFIALGITLSLVLIPL. Residues 417–423 lie on the Extracellular side of the membrane; sequence VKSPKLH. Residues 424 to 444 traverse the membrane as a helical segment; it reads YIYVFLFLLSGLVFYVPLIHF. Over 445–478 the chain is Cytoplasmic; sequence KVKFVWFQKLTCYLQLLFNICIPDVSDDHIHEES.

Belongs to the amino acid-polyamine-organocation (APC) superfamily. As to quaternary structure, disulfide-linked heterodimer composed of the catalytic light subunit SLC7A13 and the heavy subunit SLC3A1. Expressed in renal tubules in the outer stripe of the outer medulla and medullary ray (at protein level). Detected in male but not in female kidney.

Its subcellular location is the apical cell membrane. The catalysed reaction is L-cystine(out) + L-aspartate(in) = L-cystine(in) + L-aspartate(out). It carries out the reaction L-cystine(out) = L-cystine(in). The enzyme catalyses L-aspartate(in) + L-glutamate(out) = L-aspartate(out) + L-glutamate(in). It catalyses the reaction L-aspartate(in) + L-glutamine(out) = L-aspartate(out) + L-glutamine(in). The catalysed reaction is L-aspartate(in) + L-methionine(out) = L-aspartate(out) + L-methionine(in). It carries out the reaction L-leucine(out) + L-aspartate(in) = L-leucine(in) + L-aspartate(out). The enzyme catalyses L-valine(out) + L-aspartate(in) = L-valine(in) + L-aspartate(out). It catalyses the reaction L-aspartate(in) + L-phenylalanine(out) = L-aspartate(out) + L-phenylalanine(in). The catalysed reaction is L-tyrosine(out) + L-aspartate(in) = L-tyrosine(in) + L-aspartate(out). It carries out the reaction L-tryptophan(out) + L-aspartate(in) = L-tryptophan(in) + L-aspartate(out). Functionally, associates with SLC3A1/rBAT to form a functional heterodimeric complex that transports anionic and neutral amino acids across the apical plasma membrane of renal epithelium. Preferentially mediates exchange transport, but can also operate via facilitated diffusion. May act as a major transporter for L-cystine in late proximal tubules, ensuring its reabsorption from the luminal fluid in exchange for cytosolic L-glutamate or L-aspartate. This is Solute carrier family 7 member 13 from Mus musculus (Mouse).